The chain runs to 338 residues: Glyceraldehyde-3-phosphate dehydrogenase (338 aa).

NAD(+) contacts are provided by residues 11-12 (TI) and Gly-111. 140 to 142 (SCN) is a D-glyceraldehyde 3-phosphate binding site. Catalysis depends on Cys-141, which acts as the Nucleophile. Residue Arg-169 coordinates NAD(+). Residue 195-196 (HG) coordinates D-glyceraldehyde 3-phosphate. Gln-302 contributes to the NAD(+) binding site.

It belongs to the glyceraldehyde-3-phosphate dehydrogenase family. As to quaternary structure, homotetramer.

Its subcellular location is the cytoplasm. It catalyses the reaction D-glyceraldehyde 3-phosphate + phosphate + NADP(+) = (2R)-3-phospho-glyceroyl phosphate + NADPH + H(+). The catalysed reaction is D-glyceraldehyde 3-phosphate + phosphate + NAD(+) = (2R)-3-phospho-glyceroyl phosphate + NADH + H(+). The protein operates within carbohydrate degradation; glycolysis; pyruvate from D-glyceraldehyde 3-phosphate: step 1/5. In Methanobacterium formicicum, this protein is Glyceraldehyde-3-phosphate dehydrogenase (gap).